The sequence spans 260 residues: Putative hydro-lyase Dshi_0610 (260 aa).

Belongs to the D-glutamate cyclase family.

This chain is Putative hydro-lyase Dshi_0610, found in Dinoroseobacter shibae (strain DSM 16493 / NCIMB 14021 / DFL 12).